The chain runs to 511 residues: Bifunctional purine biosynthesis protein PurH (511 aa).

The 145-residue stretch at 1-145 folds into the MGS-like domain; it reads MKKRALVSVS…KNHKFVSVIV (145 aa).

It belongs to the PurH family.

It carries out the reaction (6R)-10-formyltetrahydrofolate + 5-amino-1-(5-phospho-beta-D-ribosyl)imidazole-4-carboxamide = 5-formamido-1-(5-phospho-D-ribosyl)imidazole-4-carboxamide + (6S)-5,6,7,8-tetrahydrofolate. It catalyses the reaction IMP + H2O = 5-formamido-1-(5-phospho-D-ribosyl)imidazole-4-carboxamide. It functions in the pathway purine metabolism; IMP biosynthesis via de novo pathway; 5-formamido-1-(5-phospho-D-ribosyl)imidazole-4-carboxamide from 5-amino-1-(5-phospho-D-ribosyl)imidazole-4-carboxamide (10-formyl THF route): step 1/1. The protein operates within purine metabolism; IMP biosynthesis via de novo pathway; IMP from 5-formamido-1-(5-phospho-D-ribosyl)imidazole-4-carboxamide: step 1/1. This chain is Bifunctional purine biosynthesis protein PurH, found in Bacillus cereus (strain Q1).